A 627-amino-acid chain; its full sequence is (-)-beta-pinene synthase 2, chloroplastic (627 aa).

The transit peptide at 1 to 51 (MDLISVLPSASKSCVCLHKPLSSSTHKLKPFCRKIRILGMPRPRKSVLMVS) directs the protein to the chloroplast. Mg(2+) is bound by residues aspartate 378, aspartate 382, and aspartate 530. Residues 378–382 (DDMYD) carry the DDXXD motif motif.

It belongs to the terpene synthase family. Tpsd subfamily. The cofactor is Mg(2+). It depends on Mn(2+) as a cofactor.

Its subcellular location is the plastid. It localises to the chloroplast. It carries out the reaction (2E)-geranyl diphosphate = (1S,5S)-beta-pinene + diphosphate. The enzyme catalyses (2E)-geranyl diphosphate = (1S,5S)-alpha-pinene + diphosphate. It participates in terpene metabolism; oleoresin biosynthesis. The protein operates within secondary metabolite biosynthesis; terpenoid biosynthesis. Monoterpene synthase (TPS) involved in the biosynthesis of monoterpene natural products included in conifer oleoresin secretions and volatile emissions; these compounds contribute to biotic and abiotic stress defense against herbivores and pathogens. Catalyzes the conversion of (2E)-geranyl diphosphate (GPP) to (-)-beta-pinene and, to a lower extent, to (-)-alpha-pinene. The sequence is that of (-)-beta-pinene synthase 2, chloroplastic from Pinus banksiana (Jack pine).